The primary structure comprises 292 residues: Large ribosomal subunit protein uL18 (292 aa).

Belongs to the universal ribosomal protein uL18 family. As to quaternary structure, component of the large ribosomal subunit (LSU).

Its subcellular location is the cytoplasm. It is found in the nucleus. In terms of biological role, component of the ribosome, a large ribonucleoprotein complex responsible for the synthesis of proteins in the cell. The small ribosomal subunit (SSU) binds messenger RNAs (mRNAs) and translates the encoded message by selecting cognate aminoacyl-transfer RNA (tRNA) molecules. The large subunit (LSU) contains the ribosomal catalytic site termed the peptidyl transferase center (PTC), which catalyzes the formation of peptide bonds, thereby polymerizing the amino acids delivered by tRNAs into a polypeptide chain. The nascent polypeptides leave the ribosome through a tunnel in the LSU and interact with protein factors that function in enzymatic processing, targeting, and the membrane insertion of nascent chains at the exit of the ribosomal tunnel. The protein is Large ribosomal subunit protein uL18 (rpl5) of Dictyostelium discoideum (Social amoeba).